We begin with the raw amino-acid sequence, 371 residues long: Protein STRICTOSIDINE SYNTHASE-LIKE 6 (371 aa).

The N-terminal stretch at 1–21 (MPVFLSSRFLFFCIIVPLLIS) is a signal peptide. 2 N-linked (GlcNAc...) asparagine glycosylation sites follow: asparagine 101 and asparagine 137. The residue at position 303 (tyrosine 303) is a Phosphotyrosine.

This sequence belongs to the strictosidine synthase family.

It is found in the vacuole. The sequence is that of Protein STRICTOSIDINE SYNTHASE-LIKE 6 from Arabidopsis thaliana (Mouse-ear cress).